Reading from the N-terminus, the 375-residue chain is MAALRDAEIQKDVQTYYGQVLKRSADLQTNGCVTTARPVPKHIREALQNVHEEVALRYYGCGLVIPEHLENCWILDLGSGSGRDCYVLSQLVGEKGHVTGIDMTKGQVEVAEKYLDYHMEKYGFQASNVTFIHGYIEKLGEAGIKNESHDIVVSNCVINLVPDKQQVLQEAYRVLKHGGELYFSDVYTSLELPEEIRTHKVLWGECLGGALYWKELAVLAQKIGFCPPRLVTANLITIQNKELERVIGDCRFVSATFRLFKHSKTGPTKRCQVIYNGGITGHEKELMFDANFTFKEGEIVEVDEETAAILKNSRFAQDFLIRPIGEKLPTSGGCSALELKDIITDPFKLAEESDSMKSRCVPDAAGGCCGTKKSC.

S335 bears the Phosphoserine mark.

The protein belongs to the methyltransferase superfamily. Arsenite methyltransferase family.

Its subcellular location is the cytoplasm. The protein resides in the cytosol. The enzyme catalyses arsenic triglutathione + [thioredoxin]-dithiol + S-adenosyl-L-methionine + 2 H2O = methylarsonous acid + [thioredoxin]-disulfide + 3 glutathione + S-adenosyl-L-homocysteine + H(+). The catalysed reaction is arsenic triglutathione + 2 [thioredoxin]-dithiol + 2 S-adenosyl-L-methionine + H2O = dimethylarsinous acid + 2 [thioredoxin]-disulfide + 3 glutathione + 2 S-adenosyl-L-homocysteine + 2 H(+). It carries out the reaction arsenic triglutathione + 3 [thioredoxin]-dithiol + 3 S-adenosyl-L-methionine = trimethylarsine + 3 [thioredoxin]-disulfide + 3 glutathione + 3 S-adenosyl-L-homocysteine + 3 H(+). Functionally, catalyzes the transfer of a methyl group from AdoMet to trivalent arsenicals producing methylated and dimethylated arsenicals. It methylates arsenite to form methylarsonate, Me-AsO(3)H(2), which is reduced by methylarsonate reductase to methylarsonite, Me-As(OH)2. Methylarsonite is also a substrate and it is converted into the much less toxic compound dimethylarsinate (cacodylate), Me(2)As(O)-OH. This Homo sapiens (Human) protein is Arsenite methyltransferase (AS3MT).